Consider the following 1017-residue polypeptide: Probable disease resistance protein RDL5 (1017 aa).

Residues 25–52 (QGVEDQVTELKRDLNMLSSFLKDANAKK) adopt a coiled-coil conformation. The NB-ARC domain occupies 147 to 460 (KQREMRQKFS…AEGIFQPRHY (314 aa)). An ATP-binding site is contributed by 190 to 197 (GMGGLGKT). LRR repeat units lie at residues 602 to 627 (LIHL…NLKL), 649 to 674 (MQEL…NLVK), 675 to 699 (LETL…RLST), 768 to 791 (PSHL…ILEK), 792 to 819 (LLQL…GFPQ), 841 to 865 (MPLL…HLPS), and 937 to 962 (MPFL…QFIY).

It belongs to the disease resistance NB-LRR family.

Functionally, potential disease resistance protein. The protein is Probable disease resistance protein RDL5 (RDL5) of Arabidopsis thaliana (Mouse-ear cress).